The primary structure comprises 242 residues: D-proline reductase subunit gamma (242 aa).

Catalysis depends on selenocysteine 152, which acts as the Nucleophile. Residue selenocysteine 152 is a non-standard amino acid, selenocysteine.

As to quaternary structure, consists of 3 subunits of 23, 26 and 45 kDa (alpha, gamma and beta respectively). The molecular weight of the complex is approximately 870 kDa, suggesting a decameric structure, if all 3 subunits are present in equal stoichiometry. This subunit is carbonylated in vitro on an unidentified residue.

It is found in the cytoplasm. The enzyme catalyses [PrdC protein]-Se-L-selenocysteinyl-S-L-cysteine + 5-aminopentanoate = [PrdC protein]-L-selenocysteine/L-cysteine + D-proline. In terms of biological role, D-proline reductase catalyzes the reductive cleavage of a C-N bond in D-proline resulting in the formation of 5-aminovalerate. The alpha subunit has been shown to bind D-proline, presumably via the pyruvoyl group. The sequence is that of D-proline reductase subunit gamma (prdB) from Acetoanaerobium sticklandii (strain ATCC 12662 / DSM 519 / JCM 1433 / CCUG 9281 / NCIMB 10654 / HF) (Clostridium sticklandii).